A 117-amino-acid chain; its full sequence is Large ribosomal subunit protein uL24 (117 aa).

A compositionally biased stretch (polar residues) spans 1–12 (MSKKNSQTSPQR). Residues 1–20 (MSKKNSQTSPQRQKMHVKKG) are disordered.

The protein belongs to the universal ribosomal protein uL24 family. Part of the 50S ribosomal subunit.

In terms of biological role, one of two assembly initiator proteins, it binds directly to the 5'-end of the 23S rRNA, where it nucleates assembly of the 50S subunit. One of the proteins that surrounds the polypeptide exit tunnel on the outside of the subunit. The sequence is that of Large ribosomal subunit protein uL24 from Microcystis aeruginosa (strain NIES-843 / IAM M-2473).